We begin with the raw amino-acid sequence, 257 residues long: Aspartate/glutamate leucyltransferase (257 aa).

This sequence belongs to the R-transferase family. Bpt subfamily.

Its subcellular location is the cytoplasm. It carries out the reaction N-terminal L-glutamyl-[protein] + L-leucyl-tRNA(Leu) = N-terminal L-leucyl-L-glutamyl-[protein] + tRNA(Leu) + H(+). The catalysed reaction is N-terminal L-aspartyl-[protein] + L-leucyl-tRNA(Leu) = N-terminal L-leucyl-L-aspartyl-[protein] + tRNA(Leu) + H(+). Functionally, functions in the N-end rule pathway of protein degradation where it conjugates Leu from its aminoacyl-tRNA to the N-termini of proteins containing an N-terminal aspartate or glutamate. This Sphingopyxis alaskensis (strain DSM 13593 / LMG 18877 / RB2256) (Sphingomonas alaskensis) protein is Aspartate/glutamate leucyltransferase.